A 499-amino-acid polypeptide reads, in one-letter code: UDP-N-acetylmuramoylalanine--D-glutamate ligase (499 aa).

128-134 serves as a coordination point for ATP; that stretch reads GTNGKTT.

It belongs to the MurCDEF family.

The protein resides in the cytoplasm. The enzyme catalyses UDP-N-acetyl-alpha-D-muramoyl-L-alanine + D-glutamate + ATP = UDP-N-acetyl-alpha-D-muramoyl-L-alanyl-D-glutamate + ADP + phosphate + H(+). The protein operates within cell wall biogenesis; peptidoglycan biosynthesis. In terms of biological role, cell wall formation. Catalyzes the addition of glutamate to the nucleotide precursor UDP-N-acetylmuramoyl-L-alanine (UMA). The chain is UDP-N-acetylmuramoylalanine--D-glutamate ligase from Rhodococcus jostii (strain RHA1).